A 134-amino-acid chain; its full sequence is Large ribosomal subunit protein bL20 (134 aa).

Belongs to the bacterial ribosomal protein bL20 family.

In terms of biological role, binds directly to 23S ribosomal RNA and is necessary for the in vitro assembly process of the 50S ribosomal subunit. It is not involved in the protein synthesizing functions of that subunit. This chain is Large ribosomal subunit protein bL20, found in Rhizobium rhizogenes (strain K84 / ATCC BAA-868) (Agrobacterium radiobacter).